The primary structure comprises 114 residues: Photosystem II reaction center Psb28 protein (114 aa).

It belongs to the Psb28 family. Part of the photosystem II complex.

It is found in the plastid. It localises to the chloroplast thylakoid membrane. This is Photosystem II reaction center Psb28 protein from Thalassiosira pseudonana (Marine diatom).